The following is a 94-amino-acid chain: Co-chaperonin GroES (94 aa).

Belongs to the GroES chaperonin family. In terms of assembly, heptamer of 7 subunits arranged in a ring. Interacts with the chaperonin GroEL.

It is found in the cytoplasm. Together with the chaperonin GroEL, plays an essential role in assisting protein folding. The GroEL-GroES system forms a nano-cage that allows encapsulation of the non-native substrate proteins and provides a physical environment optimized to promote and accelerate protein folding. GroES binds to the apical surface of the GroEL ring, thereby capping the opening of the GroEL channel. The sequence is that of Co-chaperonin GroES from Lactococcus lactis subsp. lactis (strain IL1403) (Streptococcus lactis).